Consider the following 849-residue polypeptide: Protein lap1 (849 aa).

LRR repeat units follow at residues 18-39 (VIDK…WQHE), 41-62 (TLEE…LFYC), 64-85 (GLRV…IGSL), 87-108 (QLQH…IKSC), 110-131 (HLTH…ITSL), 133-155 (SLQE…GRLV), 156-177 (NLRI…MVRL), 179-200 (NLQR…VGEL), 202-224 (SLRE…GKLR), 225-246 (DLQH…LSNW), 248-269 (NVEV…VGML), 271-292 (SLVT…ISYL), 294-315 (QLEE…IGML), 317-338 (SLRF…LCSC), 340-362 (QLSV…GNLS), 363-384 (KMKV…MLNL), and 386-407 (NLTS…QYLD). Residues 716–752 (NNISNNLEPNPEEEDQELDDTMSQHSLNSTATNNTSK) form a disordered region. The span at 725-735 (NPEEEDQELDD) shows a compositional bias: acidic residues. The segment covering 736–752 (TMSQHSLNSTATNNTSK) has biased composition (polar residues). In terms of domain architecture, PDZ spans 770 to 849 (VKQVTLKWEN…TVMNIMLSRK (80 aa)).

This sequence belongs to the LAP (LRR and PDZ) protein family.

Functionally, may have a role in assembling adherens junctions. The protein is Protein lap1 of Drosophila melanogaster (Fruit fly).